Here is a 352-residue protein sequence, read N- to C-terminus: UDP-3-O-acylglucosamine N-acyltransferase (352 aa).

Catalysis depends on His-257, which acts as the Proton acceptor.

The protein belongs to the transferase hexapeptide repeat family. LpxD subfamily. In terms of assembly, homotrimer.

It carries out the reaction a UDP-3-O-[(3R)-3-hydroxyacyl]-alpha-D-glucosamine + a (3R)-hydroxyacyl-[ACP] = a UDP-2-N,3-O-bis[(3R)-3-hydroxyacyl]-alpha-D-glucosamine + holo-[ACP] + H(+). The protein operates within bacterial outer membrane biogenesis; LPS lipid A biosynthesis. Its function is as follows. Catalyzes the N-acylation of UDP-3-O-acylglucosamine using 3-hydroxyacyl-ACP as the acyl donor. Is involved in the biosynthesis of lipid A, a phosphorylated glycolipid that anchors the lipopolysaccharide to the outer membrane of the cell. This Methylobacterium nodulans (strain LMG 21967 / CNCM I-2342 / ORS 2060) protein is UDP-3-O-acylglucosamine N-acyltransferase.